The following is a 336-amino-acid chain: Inositol 2-dehydrogenase (336 aa).

It belongs to the Gfo/Idh/MocA family. Homotetramer.

The enzyme catalyses myo-inositol + NAD(+) = scyllo-inosose + NADH + H(+). Its function is as follows. Involved in the oxidation of myo-inositol (MI) to 2-keto-myo-inositol (2KMI or 2-inosose). In Agrobacterium fabrum (strain C58 / ATCC 33970) (Agrobacterium tumefaciens (strain C58)), this protein is Inositol 2-dehydrogenase.